A 500-amino-acid chain; its full sequence is Replicase polyprotein 1ab (500 aa).

The region spanning 54–196 (LVNHVRVDCS…PWSILLRKGG (143 aa)) is the CoV Nsp1 globular domain. One can recognise a Peptidase C16 domain in the interval 352 to 500 (AFDAIYSETL…MCKCSFKAYF (149 aa)). Cys-389 (for PL1-PRO activity) is an active-site residue. The segment at 466-494 (CLKCGMELKLQGLDAVFFYGDVVSHMCKC) adopts a C4-type zinc-finger fold.

This sequence belongs to the coronaviruses polyprotein 1ab family.

Functionally, the replicase polyprotein of coronaviruses is a multifunctional protein: it contains the activities necessary for the transcription of negative stranded RNA, leader RNA, subgenomic mRNAs and progeny virion RNA as well as proteinases responsible for the cleavage of the polyprotein into functional products. In terms of biological role, the papain-like proteinase 1 (PL1-PRO) is responsible for the cleavages located at the N-terminus of the replicase polyprotein. Activity of PL1-PRO is strongly dependent on zinc. Its function is as follows. Non-structural protein 1: binds to the 40S ribosomal subunit and inhibits host translation. The nsp1-40S ribosome complex further induces an endonucleolytic cleavage near the 5'UTR of host mRNAs, targeting them for degradation. By suppressing host gene expression, nsp1 facilitates efficient viral gene expression in infected cells and evasion from host immune response. This chain is Replicase polyprotein 1ab (rep), found in Mus musculus (Mouse).